We begin with the raw amino-acid sequence, 71 residues long: Translation initiation factor IF-1 (71 aa).

An S1-like domain is found at 1–71 (MAKQSAIEQD…LSKARITYRY (71 aa)).

The protein belongs to the IF-1 family. Component of the 30S ribosomal translation pre-initiation complex which assembles on the 30S ribosome in the order IF-2 and IF-3, IF-1 and N-formylmethionyl-tRNA(fMet); mRNA recruitment can occur at any time during PIC assembly.

It is found in the cytoplasm. One of the essential components for the initiation of protein synthesis. Stabilizes the binding of IF-2 and IF-3 on the 30S subunit to which N-formylmethionyl-tRNA(fMet) subsequently binds. Helps modulate mRNA selection, yielding the 30S pre-initiation complex (PIC). Upon addition of the 50S ribosomal subunit IF-1, IF-2 and IF-3 are released leaving the mature 70S translation initiation complex. In Flavobacterium johnsoniae (strain ATCC 17061 / DSM 2064 / JCM 8514 / BCRC 14874 / CCUG 350202 / NBRC 14942 / NCIMB 11054 / UW101) (Cytophaga johnsonae), this protein is Translation initiation factor IF-1.